Consider the following 219-residue polypeptide: Probable nicotinate-nucleotide adenylyltransferase (219 aa).

The protein belongs to the NadD family.

It catalyses the reaction nicotinate beta-D-ribonucleotide + ATP + H(+) = deamido-NAD(+) + diphosphate. The protein operates within cofactor biosynthesis; NAD(+) biosynthesis; deamido-NAD(+) from nicotinate D-ribonucleotide: step 1/1. In terms of biological role, catalyzes the reversible adenylation of nicotinate mononucleotide (NaMN) to nicotinic acid adenine dinucleotide (NaAD). This Pseudomonas entomophila (strain L48) protein is Probable nicotinate-nucleotide adenylyltransferase.